We begin with the raw amino-acid sequence, 270 residues long: tRNA pseudouridine synthase A (270 aa).

Asp-60 acts as the Nucleophile in catalysis. The interval 107 to 111 (FHARF) is RNA binding. Tyr-118 serves as a coordination point for substrate. The interval 168 to 172 (QCQSR) is interaction with tRNA.

It belongs to the tRNA pseudouridine synthase TruA family. In terms of assembly, homodimer.

It catalyses the reaction uridine(38/39/40) in tRNA = pseudouridine(38/39/40) in tRNA. Formation of pseudouridine at positions 38, 39 and 40 in the anticodon stem and loop of transfer RNAs. The polypeptide is tRNA pseudouridine synthase A (Escherichia coli (strain 55989 / EAEC)).